The following is a 672-amino-acid chain: Glycogen [starch] synthase (672 aa).

Residue Lys56 coordinates UDP-alpha-D-glucose. Residues 645–672 (MRDNEGKVPSAATSRRPSIHSSDGEDDE) form a disordered region. Residues 655–665 (AATSRRPSIHS) are compositionally biased toward polar residues.

The protein belongs to the glycosyltransferase 3 family. In terms of assembly, forms a hetero-octamer with each protomer of the gsy-1 homotetramer bound to one molecule of gyg-1. The N-terminus is involved in interprotomer contacts with gyg-1. The interaction with gyg-1 is required for glycogen production but is not required for gsy-1 intrinsic activity.

It catalyses the reaction [(1-&gt;4)-alpha-D-glucosyl](n) + UDP-alpha-D-glucose = [(1-&gt;4)-alpha-D-glucosyl](n+1) + UDP + H(+). The protein operates within glycan biosynthesis; glycogen biosynthesis. Functionally, transfers the glycosyl residue from UDP-Glc to the non-reducing end of alpha-1,4-glucan. The polypeptide is Glycogen [starch] synthase (Caenorhabditis elegans).